A 755-amino-acid chain; its full sequence is Polyribonucleotide nucleotidyltransferase (755 aa).

The Mg(2+) site is built by Asp545 and Asp551. Residues 611–670 (PRITAITVPVNKIGEVIGPKGKTINSITEETGANISIEEDGTVYVSAASGAAAEAAIEKI) form the KH domain. The S1 motif domain occupies 682 to 751 (GERFLGTVVK…NRGKISLAPV (70 aa)).

The protein belongs to the polyribonucleotide nucleotidyltransferase family. The cofactor is Mg(2+).

The protein resides in the cytoplasm. It catalyses the reaction RNA(n+1) + phosphate = RNA(n) + a ribonucleoside 5'-diphosphate. Functionally, involved in mRNA degradation. Catalyzes the phosphorolysis of single-stranded polyribonucleotides processively in the 3'- to 5'-direction. The sequence is that of Polyribonucleotide nucleotidyltransferase from Corynebacterium diphtheriae (strain ATCC 700971 / NCTC 13129 / Biotype gravis).